We begin with the raw amino-acid sequence, 593 residues long: A-type ATP synthase subunit A (593 aa).

Residue 236–243 (GPFGSGKT) coordinates ATP.

Belongs to the ATPase alpha/beta chains family. As to quaternary structure, has multiple subunits with at least A(3), B(3), C, D, E, F, H, I and proteolipid K(x).

It localises to the cell membrane. It catalyses the reaction ATP + H2O + 4 H(+)(in) = ADP + phosphate + 5 H(+)(out). In terms of biological role, produces ATP from ADP in the presence of a proton gradient across the membrane. The archaeal alpha chain is a catalytic subunit. Functionally, component of the A-type ATP synthase that produces ATP from ADP in the presence of a proton gradient across the membrane. The A chain is the catalytic subunit. The protein is A-type ATP synthase subunit A of Pyrobaculum aerophilum (strain ATCC 51768 / DSM 7523 / JCM 9630 / CIP 104966 / NBRC 100827 / IM2).